Reading from the N-terminus, the 215-residue chain is Peptide methionine sulfoxide reductase MsrA (215 aa).

Residue cysteine 58 is part of the active site.

This sequence belongs to the MsrA Met sulfoxide reductase family.

The catalysed reaction is L-methionyl-[protein] + [thioredoxin]-disulfide + H2O = L-methionyl-(S)-S-oxide-[protein] + [thioredoxin]-dithiol. The enzyme catalyses [thioredoxin]-disulfide + L-methionine + H2O = L-methionine (S)-S-oxide + [thioredoxin]-dithiol. Functionally, has an important function as a repair enzyme for proteins that have been inactivated by oxidation. Catalyzes the reversible oxidation-reduction of methionine sulfoxide in proteins to methionine. This is Peptide methionine sulfoxide reductase MsrA from Pseudomonas syringae pv. tomato (strain ATCC BAA-871 / DC3000).